A 412-amino-acid chain; its full sequence is Peptidase T (412 aa).

His-84 contacts Zn(2+). Residue Asp-86 is part of the active site. Position 146 (Asp-146) interacts with Zn(2+). Glu-179 serves as the catalytic Proton acceptor. Zn(2+)-binding residues include Glu-180, Asp-202, and His-385.

This sequence belongs to the peptidase M20B family. Zn(2+) serves as cofactor.

The protein resides in the cytoplasm. The enzyme catalyses Release of the N-terminal residue from a tripeptide.. Its function is as follows. Cleaves the N-terminal amino acid of tripeptides. The protein is Peptidase T of Haemophilus influenzae (strain PittGG).